Here is a 55-residue protein sequence, read N- to C-terminus: uncharacterized protein (55 aa).

Over residues 1-15 the composition is skewed to polar residues; sequence MVGQEQLESSPLCQH. Positions 1 to 26 are disordered; it reads MVGQEQLESSPLCQHSDNETETKREC. The span at 16–26 shows a compositional bias: basic and acidic residues; that stretch reads SDNETETKREC.

This is an uncharacterized protein from Escherichia coli (strain K12).